Here is a 338-residue protein sequence, read N- to C-terminus: MTVFKNERLSWLPYIAIVILLHVIGFSFLWIAGKDHHILFGMGILAYTLGLRHAFDADHIAAIDNTVRKLLQQRKDPSGVGFYFSIGHSSVVFLMAVFLGVSVKWAKDELPHFQDIGGTIGTLVSGFFLVLIGVLNLIILISLINLFAKLRREHIEEAEVDALLESRGLVSRFVGPYFKLITRSWHVLPLGFLFGLGFDTASEIALLALSSGASQQAISFIGILSLPILFASGMSLLDTLDGVVMKYAYNWAFFNPIRKIYYNITITAISVMAALVIGMIELLQILADKLDLHGAFWAFIGSIEFDYLGYILVALFLITWLISSLIWKFGRIEHKWSR.

A run of 8 helical transmembrane segments spans residues 11-31 (WLPYIAIVILLHVIGFSFLWI), 37-57 (HILFGMGILAYTLGLRHAFDA), 79-99 (GVGFYFSIGHSSVVFLMAVFL), 127-147 (FFLVLIGVLNLIILISLINLF), 187-207 (VLPLGFLFGLGFDTASEIALL), 217-237 (AISFIGILSLPILFASGMSLL), 266-286 (ITAISVMAALVIGMIELLQIL), and 307-327 (YLGYILVALFLITWLISSLIW).

Belongs to the NiCoT transporter (TC 2.A.52) family.

It is found in the cell membrane. Functionally, secondary nickel transporter. Required for full urease activity. The sequence is that of Nickel transporter NixA from Staphylococcus aureus (strain NCTC 8325 / PS 47).